Here is a 151-residue protein sequence, read N- to C-terminus: 3-hydroxyacyl-[acyl-carrier-protein] dehydratase FabZ (151 aa).

The active site involves H56.

This sequence belongs to the thioester dehydratase family. FabZ subfamily.

It localises to the cytoplasm. The catalysed reaction is a (3R)-hydroxyacyl-[ACP] = a (2E)-enoyl-[ACP] + H2O. Involved in unsaturated fatty acids biosynthesis. Catalyzes the dehydration of short chain beta-hydroxyacyl-ACPs and long chain saturated and unsaturated beta-hydroxyacyl-ACPs. This is 3-hydroxyacyl-[acyl-carrier-protein] dehydratase FabZ from Rhodopseudomonas palustris (strain ATCC BAA-98 / CGA009).